Here is a 147-residue protein sequence, read N- to C-terminus: Helix-loop-helix protein 13 (147 aa).

The bHLH domain maps to 41-93 (EERQTASIRERKRMCSINVAFIELRNYIPTFPYEKRLSKIDTLNLAIAYINML).

In terms of tissue distribution, expressed in hermaphrodite dopaminergic neurons (ADE, CEP, and PDE).

The protein resides in the nucleus. Its subcellular location is the cytoplasm. Transcriptional activator. Shown to have a role in the negative regulation of exit from L1 arrest and dauer diapause dependent on IIS signaling (insulin and insulin-like growth factor (IGF) signaling). Hypodermal expression is regulated by IIS/daf-16 while neuronal expression is not under the control of IIS/daf-16. The protein is Helix-loop-helix protein 13 of Caenorhabditis elegans.